Here is a 54-residue protein sequence, read N- to C-terminus: Protein YmjE (54 aa).

This chain is Protein YmjE, found in Escherichia coli (strain K12).